Here is a 480-residue protein sequence, read N- to C-terminus: Glycogen synthase (480 aa).

K15 is an ADP-alpha-D-glucose binding site.

It belongs to the glycosyltransferase 1 family. Bacterial/plant glycogen synthase subfamily.

The enzyme catalyses [(1-&gt;4)-alpha-D-glucosyl](n) + ADP-alpha-D-glucose = [(1-&gt;4)-alpha-D-glucosyl](n+1) + ADP + H(+). The protein operates within glycan biosynthesis; glycogen biosynthesis. In terms of biological role, synthesizes alpha-1,4-glucan chains using ADP-glucose. The protein is Glycogen synthase of Rhizobium rhizogenes (strain K84 / ATCC BAA-868) (Agrobacterium radiobacter).